The sequence spans 677 residues: Protein hook (677 aa).

The Calponin-homology (CH) domain maps to 6–123; it reads NEMYYSLLEW…RLLQLVLGCA (118 aa). 2 coiled-coil regions span residues 135-436 and 478-588; these read EIMC…KCGH and QTAL…AKEV.

Belongs to the hook family. As to quaternary structure, homodimer. Interacts with microtubules via its N-terminus.

The protein resides in the cytoplasm. It is found in the cytoskeleton. Its subcellular location is the endosome. The protein localises to the synapse. Involved in endocytic trafficking by stabilizing organelles of the endocytic pathway. Probably acts as a cytoskeletal linker protein required to tether endosome vesicles to the cytoskeleton. Involved in modulation of endocytosis at stages required for down-regulation of membrane proteins that control synapse size. Not involved in synaptic vesicle recycling. Required in R7 cells for boss endocytosis into multivesicular bodies (MVBs). Has a role in regulating adult longevity. This chain is Protein hook, found in Drosophila persimilis (Fruit fly).